Here is a 911-residue protein sequence, read N- to C-terminus: MATSVDNRHYPRLSSALNGGVVHSFKPPLVPSPSLDRDQDQSVNVPTEKSVDKTTKEDRFDSSDDEDESHNRYVSYYKEMVLKSNSDLEPTALDSRDESTGDKWIHRNSSMVRLTGKHPFNAEAPLPRLMHHGFITPVPLHYVRNHGGVPKAEWSDWSVEVTGLVKRPAGLTMEQLISEFPSREFPVTLVCAGNRRKEQNMVKQTIGFNWGSAGVSTSLWRGVALSDVLRRCGVYSKRGGALNVCFEGAEDLPGGGGSKYGTSIKKEMAMDPARDIILAYMQNGELLTPDHGFPVRVIIPGFIGGRMVKWLKRIIVTPQESDNYYHYKDNRVLPSYVDAELPNEESWWYRPEYIINELNINSVITTPGHEEILPINAFTTQKPYTLKGYAYSGGGKKVTRVEVTLDGGETWSVCELDHQEKPNKYGKFWCWCFWSLDVEVLDLLSAKEVAVRAWDESLNTQPEKLIWNLMGMMNNCWFRIKTNVCKPHRGEIGIVFEHPTRPGNQSGGWMAKERQIEKSSESHPTLKKSVSTPFMNTASKMYSMSEVRKHNSAESAWIIVHGHIYDCTRFLKDHPGGSDSILINAGTDCTEEFEAIHSDKAKKLLEDYRIGELITTGYDSSPNVSVHGGSSVMSLLAPIRQLAPTKNIALVNPREKVPVKLIEKTSISHDVRRFRFALPSEDQQLGLPVGKHIFLCATINDKLCLRAYTPTSTVDAVGYIDLVIKVYFKNVHPRFPNGGLMSQHPDSLPIGAVLDIKGPLGHIEYQGRGKFMVSGKPKFANKLAMLAGGTGITPIYQVIQSILSDPEDETEMFVVYANRTEDDILVREELEGWASKFPDRLKIWYVVEIAKEGWEYSTGFITEAVLREHVPEGLEGESLALACGPPPMIQFALQPNLEKMGYDIKEDLLIF.

A disordered region spans residues 1-68 (MATSVDNRHY…RFDSSDDEDE (68 aa)). Residues 49–62 (KSVDKTTKEDRFDS) are compositionally biased toward basic and acidic residues. Cysteine 191 is a Mo-molybdopterin binding site. Positions 539-614 (SKMYSMSEVR…LEDYRIGELI (76 aa)) constitute a Cytochrome b5 heme-binding domain. 2 residues coordinate heme: histidine 574 and histidine 597. The FAD-binding FR-type domain maps to 654–766 (REKVPVKLIE…KGPLGHIEYQ (113 aa)). FAD contacts are provided by residues 706–709 (RAYT), 723–727 (VIKVY), phenylalanine 728, phenylalanine 735, 740–742 (LMS), and threonine 793.

Belongs to the nitrate reductase family. Homodimer. FAD is required as a cofactor. Requires heme as cofactor. Mo-molybdopterin serves as cofactor.

The enzyme catalyses nitrite + NAD(+) + H2O = nitrate + NADH + H(+). Its function is as follows. Nitrate reductase is a key enzyme involved in the first step of nitrate assimilation in plants, fungi and bacteria. In Brassica napus (Rape), this protein is Nitrate reductase [NADH], clone PBNBR1405 (NIA1).